Reading from the N-terminus, the 381-residue chain is 3-hydroxyisobutyryl-CoA hydrolase, mitochondrial (381 aa).

The N-terminal 25 residues, 1 to 25 (MDRLLTISNHIGKNIRQFSTSTEEV), are a transit peptide targeting the mitochondrion. Residues Glu-116, Gly-141, Glu-164, and Asp-172 each contribute to the substrate site.

It belongs to the enoyl-CoA hydratase/isomerase family.

The protein localises to the mitochondrion. The enzyme catalyses 3-hydroxy-2-methylpropanoyl-CoA + H2O = 3-hydroxy-2-methylpropanoate + CoA + H(+). It functions in the pathway amino-acid degradation; L-valine degradation. In terms of biological role, hydrolyzes 3-hydroxyisobutyryl-CoA (HIBYL-CoA), a saline catabolite. The protein is 3-hydroxyisobutyryl-CoA hydrolase, mitochondrial (hibch) of Dictyostelium discoideum (Social amoeba).